The primary structure comprises 376 residues: Enoyl-[acyl-carrier-protein] reductase, mitochondrial (376 aa).

Residue Tyr-72 is the Proton donor of the active site. NADP(+) is bound by residues Asn-154, 182 to 185 (TSAV), 205 to 207 (RDR), 280 to 283 (YGGM), 305 to 307 (YWI), and Lys-369.

Belongs to the zinc-containing alcohol dehydrogenase family. Quinone oxidoreductase subfamily. In terms of assembly, homodimer.

It localises to the mitochondrion matrix. It catalyses the reaction a 2,3-saturated acyl-[ACP] + NADP(+) = a (2E)-enoyl-[ACP] + NADPH + H(+). Catalyzes the NADPH-dependent reduction of trans-2-enoyl thioesters in mitochondrial fatty acid synthesis (fatty acid synthesis type II). Fatty acid chain elongation in mitochondria uses acyl carrier protein (ACP) as an acyl group carrier, but the enzyme accepts both ACP and CoA thioesters as substrates in vitro. Required for respiration and the maintenance of the mitochondrial compartment. The chain is Enoyl-[acyl-carrier-protein] reductase, mitochondrial (ETR1) from Eremothecium gossypii (strain ATCC 10895 / CBS 109.51 / FGSC 9923 / NRRL Y-1056) (Yeast).